The following is a 529-amino-acid chain: Phospholipase A1-Igamma2, chloroplastic (529 aa).

The transit peptide at 1–43 directs the protein to the chloroplast; the sequence is MAAIPSHNNLLTINHKNSITGSSSLNTNFSEINFPAKFRVATR. Positions 316-320 match the GXSXG motif; sequence GHSLG. Serine 318 (acyl-ester intermediate) is an active-site residue. Residues aspartate 381 and histidine 437 each act as charge relay system in the active site.

Belongs to the AB hydrolase superfamily. Lipase family. In terms of assembly, interacts with SBP1. In terms of tissue distribution, widely expressed. Highly expressed in leaves and stems.

The protein localises to the plastid. It is found in the chloroplast. It carries out the reaction 1,2-dihexadecanoyl-sn-glycero-3-phosphocholine + H2O = 2-hexadecanoyl-sn-glycero-3-phosphocholine + hexadecanoate + H(+). The enzyme catalyses a 1,2-diacyl-3-O-(beta-D-galactosyl)-sn-glycerol + H2O = an acyl-3-O-(beta-D-galactosyl)-sn-glycerol + a fatty acid + H(+). The catalysed reaction is a 1,2-diacyl-3-O-[alpha-D-galactosyl-(1-&gt;6)-beta-D-galactosyl]-sn-glycerol + H2O = acyl-3-O-[alpha-D-galactosyl-(1-&gt;6)-beta-D-galactosyl]-sn-glycerol + a fatty acid + H(+). It catalyses the reaction a triacylglycerol + H2O = a diacylglycerol + a fatty acid + H(+). Its function is as follows. Acylhydrolase with broad specificity. Catalyzes the hydrolysis of phosphatidylcholine at the sn-1 position. Possesses moderate activity toward phosphatidylcholine (PC), monogalactosyldiacylglycerol (MGDG), digalactosyldiacylglycerol (DGDG) and triacylglycerol (TAG). The polypeptide is Phospholipase A1-Igamma2, chloroplastic (Arabidopsis thaliana (Mouse-ear cress)).